Consider the following 848-residue polypeptide: MNNNDLFQASRRRFLAQLGGLTVAGMLGPSLLTPRRATAAQAATDAVISKEGILTGSHWGAIRATVKDGRFVAAKPFELDKYPSKMIAGLPDHVHNAARIRYPMVRVDWLRKRHLSDTSQRGDNRFVRVSWDEALDMFYEELERVQKTHGPSALLTASGWQSTGMFHNASGMLAKAIALHGNSVGTGGDYSTGAAQVILPRVVGSMEVYEQQTSWPLVLQNSKTIVLWGSDLLKNQQANWWCPDHDVYEYYAQLKAKVAAGEIEVISIDPVVTSTHEYLGREHVKHIAVNPQTDVPLQLALAHTLYSENLYDKNFLANYCVGFEQFLPYLLGEKDGQPKDAAWAEKLTGIDAETIRGLARQMAANRTQIIAGWCVQRMQHGEQWAWMIVVLAAMLGQIGLPGGGFGFGWHYNGAGTPGRKGVILSGFSGSTSIPPVHDNSDYKGYSSTIPIARFIDAILEPGKVINWNGKSVKLPPLKMCIFAGTNPFHRHQQINRIIEGLRKLETVIAIDNQWTSTCRFADIVLPATTQFERNDLDQYGNHSNRGIIAMKQVVPPQFEARNDFDIFRELCRRFNREEAFTEGLDEMGWLKRIWQEGVQQGKGRGVHLPAFDDFWNNKEYVEFDHPQMFVRHQAFREDPDLEPLGTPSGLIEIYSKTIADMNYDDCQGHPMWFEKIERSHGGPGSQKYPLHLQSVHPDFRLHSQLCESETLRQQYTVAGKEPVFINPQDASARGIRNGDVVRVFNARGQVLAGAVVSDRYAPGVARIHEGAWYDPDKGGEPGALCKYGNPNVLTIDIGTSQLAQATSAHTTLVEIEKYNGTVEQVTAFNGPVEMVAQCEYVPASQVKS.

Positions 1–39 (MNNNDLFQASRRRFLAQLGGLTVAGMLGPSLLTPRRATA) form a signal peptide, tat-type signal. Ser191 contacts Mo-bis(molybdopterin guanine dinucleotide).

Belongs to the prokaryotic molybdopterin-containing oxidoreductase family. As to quaternary structure, interacts with the N-terminal domain of TorC. Mo-bis(molybdopterin guanine dinucleotide) serves as cofactor. Exported by the Tat system. The position of the signal peptide cleavage has been experimentally proven.

It is found in the periplasm. It catalyses the reaction trimethylamine + 2 Fe(III)-[cytochrome c] + H2O = trimethylamine N-oxide + 2 Fe(II)-[cytochrome c] + 3 H(+). Reduces trimethylamine-N-oxide (TMAO) into trimethylamine; an anaerobic reaction coupled to energy-yielding reactions. This Escherichia coli (strain K12) protein is Trimethylamine-N-oxide reductase 1 (torA).